The sequence spans 181 residues: MPPTNNYRISGEPPSTTPSHPPPKPKTRILSLFLVGVIMFSIFFLFLVLIGIASVLILPLLLSSLHRHHRRRRRNRRQESSDGLSSRFVKKLPQFKFSEPSTYTRYESDCVVCFDGFRQGQWCRNLPGCGHVFHRKCVDTWLLKASTCPICRARVRLWEEDPQEGELWRCFGHRRSSLLDL.

Positions 1–24 are disordered; it reads MPPTNNYRISGEPPSTTPSHPPPK. Residues 15–24 show a composition bias toward pro residues; sequence STTPSHPPPK. Residues 32–52 traverse the membrane as a helical segment; sequence LFLVGVIMFSIFFLFLVLIGI. The RING-type; atypical zinc-finger motif lies at 110–152; it reads CVVCFDGFRQGQWCRNLPGCGHVFHRKCVDTWLLKASTCPICR.

The protein belongs to the RING-type zinc finger family. ATL subfamily.

It localises to the membrane. The enzyme catalyses S-ubiquitinyl-[E2 ubiquitin-conjugating enzyme]-L-cysteine + [acceptor protein]-L-lysine = [E2 ubiquitin-conjugating enzyme]-L-cysteine + N(6)-ubiquitinyl-[acceptor protein]-L-lysine.. The protein operates within protein modification; protein ubiquitination. The protein is RING-H2 finger protein ATL56 (ATL56) of Arabidopsis thaliana (Mouse-ear cress).